The following is a 168-amino-acid chain: Protein GRE1 (168 aa).

The segment at 1–168 is disordered; that stretch reads MSNLLNKFAD…DDDSGNQGVW (168 aa). 2 stretches are compositionally biased toward basic and acidic residues: residues 8–20 and 27–43; these read FADKLHGNDHDER and DQTRQQRHEKHQQREFR. 2 stretches are compositionally biased toward polar residues: residues 56–81 and 120–144; these read NQGNFPQRQQPQSNLGGNTQFGGNDF and TSGQQQKQGRTRGAQSNRYQSSNIG.

It localises to the cytoplasm. The polypeptide is Protein GRE1 (GRE1) (Saccharomyces cerevisiae (strain ATCC 204508 / S288c) (Baker's yeast)).